The chain runs to 489 residues: Probable serine protease EDA2 (489 aa).

Positions 1-25 are cleaved as a signal peptide; sequence MSLEFGFILINIFTAIVSFSTLSHA. 3 N-linked (GlcNAc...) asparagine glycosylation sites follow: Asn-35, Asn-51, and Asn-162. Catalysis depends on Ser-178, which acts as the Charge relay system. 4 N-linked (GlcNAc...) asparagine glycosylation sites follow: Asn-253, Asn-293, Asn-365, and Asn-406. The active-site Charge relay system is the Asp-410. Asn-419 is a glycosylation site (N-linked (GlcNAc...) asparagine). The Charge relay system role is filled by His-436. Asn-456 carries an N-linked (GlcNAc...) asparagine glycan.

Belongs to the peptidase S28 family.

Its subcellular location is the secreted. In terms of biological role, may be involved in a proteolytic pathway controlling the nuclear division phase of megagametogenesis. The chain is Probable serine protease EDA2 (EDA2) from Arabidopsis thaliana (Mouse-ear cress).